The primary structure comprises 190 residues: Shikimate kinase (190 aa).

ATP is bound at residue 19–24; that stretch reads GSGKTT. Thr-23 provides a ligand contact to Mg(2+). Substrate contacts are provided by Asp-41, Arg-65, and Gly-87. Position 124 (Arg-124) interacts with ATP. Arg-143 is a substrate binding site.

The protein belongs to the shikimate kinase family. As to quaternary structure, monomer. Mg(2+) is required as a cofactor.

The protein resides in the cytoplasm. The catalysed reaction is shikimate + ATP = 3-phosphoshikimate + ADP + H(+). The protein operates within metabolic intermediate biosynthesis; chorismate biosynthesis; chorismate from D-erythrose 4-phosphate and phosphoenolpyruvate: step 5/7. Catalyzes the specific phosphorylation of the 3-hydroxyl group of shikimic acid using ATP as a cosubstrate. The polypeptide is Shikimate kinase (Synechococcus sp. (strain ATCC 27144 / PCC 6301 / SAUG 1402/1) (Anacystis nidulans)).